We begin with the raw amino-acid sequence, 128 residues long: LIM domain-containing protein 2 (128 aa).

Met1 bears the N-acetylmethionine mark. Positions 1–25 are disordered; the sequence is MFQAAGAAQATPSHEAKGSSGSSTV. Residues 39–99 enclose the LIM zinc-binding domain; the sequence is ETCAACQKTV…RPHFQQLFKS (61 aa). 8 residues coordinate Zn(2+): Cys41, Cys44, His62, Cys65, Cys68, Cys71, Cys89, and His92.

Interacts with ILK.

The protein resides in the cytoplasm. It localises to the nucleus. Functionally, acts as an activator of the protein-kinase ILK, thereby regulating cell motility. The polypeptide is LIM domain-containing protein 2 (Mus musculus (Mouse)).